A 238-amino-acid polypeptide reads, in one-letter code: Ribonuclease PH (238 aa).

Residues R86 and 124–126 (GTR) each bind phosphate.

Belongs to the RNase PH family. Homohexameric ring arranged as a trimer of dimers.

The catalysed reaction is tRNA(n+1) + phosphate = tRNA(n) + a ribonucleoside 5'-diphosphate. Its function is as follows. Phosphorolytic 3'-5' exoribonuclease that plays an important role in tRNA 3'-end maturation. Removes nucleotide residues following the 3'-CCA terminus of tRNAs; can also add nucleotides to the ends of RNA molecules by using nucleoside diphosphates as substrates, but this may not be physiologically important. Probably plays a role in initiation of 16S rRNA degradation (leading to ribosome degradation) during starvation. The protein is Ribonuclease PH of Klebsiella pneumoniae (strain 342).